The following is a 265-amino-acid chain: Cytochrome c oxidase subunit 3 (265 aa).

Helical transmembrane passes span 16-36 (PWPISGSLGALATTVGGVMYM), 41-61 (GGATLLSLGLIFLLYTMFVWW), 84-104 (YGSILFIVSEVMFLFAFFWAS), 162-182 (AVYALVATVSLALVSTGFQGM), 200-220 (FFLATGFHGFHVIIGTLFLIV), and 245-265 (WHFVDVVRLFPFVSIYWWGGI).

Belongs to the cytochrome c oxidase subunit 3 family. In terms of assembly, component of the cytochrome c oxidase (complex IV, CIV), a multisubunit enzyme composed of a catalytic core of 3 subunits and several supernumerary subunits. The complex exists as a monomer or a dimer and forms supercomplexes (SCs) in the inner mitochondrial membrane with ubiquinol-cytochrome c oxidoreductase (cytochrome b-c1 complex, complex III, CIII).

It localises to the mitochondrion inner membrane. It carries out the reaction 4 Fe(II)-[cytochrome c] + O2 + 8 H(+)(in) = 4 Fe(III)-[cytochrome c] + 2 H2O + 4 H(+)(out). Functionally, component of the cytochrome c oxidase, the last enzyme in the mitochondrial electron transport chain which drives oxidative phosphorylation. The respiratory chain contains 3 multisubunit complexes succinate dehydrogenase (complex II, CII), ubiquinol-cytochrome c oxidoreductase (cytochrome b-c1 complex, complex III, CIII) and cytochrome c oxidase (complex IV, CIV), that cooperate to transfer electrons derived from NADH and succinate to molecular oxygen, creating an electrochemical gradient over the inner membrane that drives transmembrane transport and the ATP synthase. Cytochrome c oxidase is the component of the respiratory chain that catalyzes the reduction of oxygen to water. Electrons originating from reduced cytochrome c in the intermembrane space (IMS) are transferred via the dinuclear copper A center (CU(A)) of subunit 2 and heme A of subunit 1 to the active site in subunit 1, a binuclear center (BNC) formed by heme A3 and copper B (CU(B)). The BNC reduces molecular oxygen to 2 water molecules using 4 electrons from cytochrome c in the IMS and 4 protons from the mitochondrial matrix. This chain is Cytochrome c oxidase subunit 3 (COX3), found in Aegilops columnaris (Goatgrass).